The following is a 479-amino-acid chain: POU domain, class 2, transcription factor 2 (479 aa).

Disordered stretches follow at residues 1 to 86 (MVHS…AQPH), 166 to 200 (TQAV…PSDL), 275 to 298 (SSLP…GRRR), 357 to 393 (PCSA…SQAS), and 409 to 479 (TLHP…PYQP). A compositionally biased stretch (basic and acidic residues) spans 12-37 (RMSKPLEAEKQGLDSPSEHTDTERNG). Over residues 38-60 (PDTNHQNPQNKTSPFSVSPTGPS) the composition is skewed to polar residues. A compositionally biased stretch (pro residues) spans 76–85 (APLPPQPAQP). Positions 195–269 (EEPSDLEELE…LLEKWLNDAE (75 aa)) constitute a POU-specific domain. Residues 275 to 288 (SSLPSPNQLSSPSL) show a composition bias toward low complexity. The segment at residues 297–356 (RRKKRTSIETNVRFALEKSFLANQKPTSEEILLIAEQLHMEKEVIRVWFCNRRQKEKRIN) is a DNA-binding region (homeobox). The segment at 389–410 (LSQASSSLSTTVTTLSSAVGTL) is leucine-zipper. Residues 416-425 (AGGGGGGGGA) are compositionally biased toward gly residues.

Belongs to the POU transcription factor family. Class-2 subfamily. In terms of assembly, interacts with NR3C1, AR and PGR. Interacts with POU2AF1; the interaction increases POU2F2 transactivation activity. As to expression, isoform 3 is B-cell specific. Isoform 5 is expressed in B-cells and the immunoglobulin-expressing T-cell line MOLT-4, but not in the T-cell line BW5147.

Its subcellular location is the cytoplasm. It localises to the nucleus. With respect to regulation, transactivation activity is enhanced by transcriptional coactivator POU2AF1. Functionally, transcription factor that specifically binds to the octamer motif (5'-ATTTGCAT-3'). Regulates IL6 expression in B cells with POU2AF1. Regulates transcription in a number of tissues in addition to activating immunoglobulin gene expression. Modulates transcription transactivation by NR3C1, AR and PGR. Its function is as follows. Activates the U2 small nuclear RNA (snRNA) promoter. This Homo sapiens (Human) protein is POU domain, class 2, transcription factor 2.